The primary structure comprises 458 residues: Putative long chain fatty acid-CoA ligase VraA (458 aa).

This sequence belongs to the ATP-dependent AMP-binding enzyme family.

This chain is Putative long chain fatty acid-CoA ligase VraA (vraA), found in Staphylococcus aureus (strain Mu3 / ATCC 700698).